Consider the following 310-residue polypeptide: ADP-L-glycero-D-manno-heptose-6-epimerase (310 aa).

NADP(+) contacts are provided by residues 10 to 11, 31 to 32, Lys38, Lys53, 75 to 79, and Asn92; these read FI, DN, and EGACS. Tyr140 functions as the Proton acceptor in the catalytic mechanism. Residue Lys144 coordinates NADP(+). Asn169 serves as a coordination point for substrate. The NADP(+) site is built by Val170 and Lys178. The active-site Proton acceptor is Lys178. Substrate-binding positions include Ser180, His187, 201–204, Arg209, and Tyr272; that span reads FEGS.

This sequence belongs to the NAD(P)-dependent epimerase/dehydratase family. HldD subfamily. In terms of assembly, homopentamer. It depends on NADP(+) as a cofactor.

The catalysed reaction is ADP-D-glycero-beta-D-manno-heptose = ADP-L-glycero-beta-D-manno-heptose. The protein operates within nucleotide-sugar biosynthesis; ADP-L-glycero-beta-D-manno-heptose biosynthesis; ADP-L-glycero-beta-D-manno-heptose from D-glycero-beta-D-manno-heptose 7-phosphate: step 4/4. Its function is as follows. Catalyzes the interconversion between ADP-D-glycero-beta-D-manno-heptose and ADP-L-glycero-beta-D-manno-heptose via an epimerization at carbon 6 of the heptose. In Citrobacter koseri (strain ATCC BAA-895 / CDC 4225-83 / SGSC4696), this protein is ADP-L-glycero-D-manno-heptose-6-epimerase.